A 44-amino-acid polypeptide reads, in one-letter code: Large ribosomal subunit protein bL34 (44 aa).

The protein belongs to the bacterial ribosomal protein bL34 family.

The chain is Large ribosomal subunit protein bL34 from Wolbachia pipientis wMel.